The following is a 222-amino-acid chain: Countin-3 (222 aa).

An N-terminal signal peptide occupies residues 1–20 (MNKILSLFLITILLISKVMS). Residues 21 to 105 (SSEECKLCTD…ESVKMCQYND (85 aa)) form the Saposin B-type domain. 3 cysteine pairs are disulfide-bonded: Cys-25–Cys-101, Cys-28–Cys-95, and Cys-56–Cys-68. Residues Asn-108, Asn-134, and Asn-218 are each glycosylated (N-linked (GlcNAc...) asparagine).

Belongs to the countin family.

It localises to the secreted. In terms of biological role, may control the size of the multicellular structure. The chain is Countin-3 (ctnC) from Dictyostelium discoideum (Social amoeba).